Here is a 1252-residue protein sequence, read N- to C-terminus: LRR receptor-like serine/threonine-protein kinase GSO2 (1252 aa).

The N-terminal stretch at 1–22 is a signal peptide; it reads MQQNSVLLALFFLCFSSGLGSG. At 23 to 876 the chain is on the extracellular side; that stretch reads QPGQRDDLQT…QRSLSPKTVV (854 aa). Residues N62, N77, and N117 are each glycosylated (N-linked (GlcNAc...) asparagine). 10 LRR repeats span residues 94 to 118, 120 to 143, 144 to 166, 168 to 190, 191 to 215, 217 to 239, 240 to 263, 265 to 286, 287 to 310, and 312 to 335; these read FNNL…LSNL, SSLE…LGSL, VNLK…TFGN, VNLQ…RFGR, LVQL…IGNC, SLAL…LNRL, KNLQ…LGDL, SIQY…RLTE, LANL…EFWR, and NQLE…ICSN. N157 carries N-linked (GlcNAc...) asparagine glycosylation. N-linked (GlcNAc...) asparagine glycans are attached at residues N214 and N229. A glycan (N-linked (GlcNAc...) asparagine) is linked at N299. The N-linked (GlcNAc...) asparagine glycan is linked to N336. LRR repeat units follow at residues 337-360, 361-384, 386-408, 409-433, 435-456, 457-480, 481-504, 506-528, 529-552, 554-575, 577-599, 600-622, 623-648, 650-670, 671-695, 697-719, 720-743, 745-767, 768-792, 793-816, and 818-839; these read TSLK…ISNC, QSLK…LFQL, ELTN…ISNL, TNLQ…GFLG, LEIM…IGNC, TRLQ…IGRL, KDLT…LGNC, QMTV…FGFL, TALE…LINL, NLTR…LCGS, SYLS…LGKS, TNLD…TFGK, ISEL…GLCK, LTHI…WLGK, LPLL…IFSL, NILT…IGNL, QALN…IGKL, KLFE…IGQL, QDLQ…ISTL, PKLE…IGDM, and SLGY…QFSR. N-linked (GlcNAc...) asparagine glycosylation is found at N370, N394, and N407. N455 carries N-linked (GlcNAc...) asparagine glycosylation. N538, N554, N559, and N566 each carry an N-linked (GlcNAc...) asparagine glycan. An N-linked (GlcNAc...) asparagine glycan is attached at N709. N-linked (GlcNAc...) asparagine glycosylation occurs at N780. N-linked (GlcNAc...) asparagine glycosylation occurs at N823. A helical transmembrane segment spans residues 877-897; it reads IISAISSLAAIALMVLVIILF. Residues 898-1252 are Cytoplasmic-facing; it reads FKQNHDLFKK…YREMQTDTDK (355 aa). T945 carries the phosphothreonine modification. A Protein kinase domain is found at 948-1232; that stretch reads LNEEFMIGSG…PSSRQASEYL (285 aa). ATP contacts are provided by residues 954 to 962 and K976; that span reads IGSGGSGKV. Phosphotyrosine occurs at positions 1024 and 1066. Catalysis depends on D1079, which acts as the Proton acceptor. S1114 carries the phosphoserine modification. Phosphotyrosine is present on residues Y1124 and Y1131.

It belongs to the protein kinase superfamily. Ser/Thr protein kinase family. As to quaternary structure, interacts with CIF1 and CIF2. In terms of tissue distribution, mostly expressed in siliques, seeds, developing embryos and seedlings, detected in flower buds, but not in roots, leaves or stems.

Its subcellular location is the cell membrane. It carries out the reaction L-seryl-[protein] + ATP = O-phospho-L-seryl-[protein] + ADP + H(+). It catalyses the reaction L-threonyl-[protein] + ATP = O-phospho-L-threonyl-[protein] + ADP + H(+). Functionally, together with GSO1, receptor-like serine/threonine-kinase required during the development of the epidermal surface in embryos and cotyledons. Involved in the nuclear division phase of megagametogenesis. In coordination with GSO2, regulates root growth through control of cell division and cell fate specification. Controls seedling root growth by modulating sucrose response after germination. Receptor of the peptide hormones CIF1 and CIF2 required for contiguous Casparian strip diffusion barrier formation in roots. The sequence is that of LRR receptor-like serine/threonine-protein kinase GSO2 from Arabidopsis thaliana (Mouse-ear cress).